Here is a 297-residue protein sequence, read N- to C-terminus: Homoserine kinase (297 aa).

82–92 provides a ligand contact to ATP; it reads PVSRGLGSSAA.

The protein belongs to the GHMP kinase family. Homoserine kinase subfamily.

It localises to the cytoplasm. The enzyme catalyses L-homoserine + ATP = O-phospho-L-homoserine + ADP + H(+). Its pathway is amino-acid biosynthesis; L-threonine biosynthesis; L-threonine from L-aspartate: step 4/5. In terms of biological role, catalyzes the ATP-dependent phosphorylation of L-homoserine to L-homoserine phosphate. This Clostridium botulinum (strain Okra / Type B1) protein is Homoserine kinase.